The primary structure comprises 1044 residues: MPRRQPPRPLLLLSALLCAPASAFNLDEEKLTVYSGPPGSYFGYSVDFYIPDPSTVSVLVGAPRANTTQPDIVEGGAVYHCGWPAARCRQIPFDNTNNRKIKVNGTREPIEFKTNQWFGATVKAHKEKVVACAPLYHWRTLKDSPEKDPVGTCYVAIQNFSAYAEYSPCRNSNADPEGQGFCQAGFSLDFYKNGDLIVGGPGSFYWQGQVITASIADIITNYSFKDILRKLAHEKQTGVAPPTYDDNYMGYSVAAGEFTGDSEEELVAGVPRGAQNFGYVSIINSSDLTFIQNFTGEQMASYFGYTVAVSDVNNDGLDDILVGAPLFMEREFESKPKEVGQVYLYLQESAFLFRDPQILTGTEVFGRFGSAITHLGDLNQDGYNDIAVGAPFAGEDRRGKVLIYNGYSNGLKTDPSQVLNGAWASQSMPSGFGFTLRGDSDVDKNDYPDLIVGAFGAGKAVVYRARPVVTVNALLILNPMIVNPDNKTCQPPGSPLFVACFTVRVCAAFEGQSISDEIVLKGELQLDSLKQKGAVKRTLFFDYHQSHHYFSIVMERQKKLYCQDFLVYLRDETEFRDKLSPININLNYSLDESHFKDSLLVKPILNYYQRPSVTEQAYILVDCGEDNLCIPDLHLSAVPDKDQLIIGEENCVMLIINPRNDGEGAYEAELHIKIPPEADYTGVERNNKALRVLSCDYKMENETRMVVCDLGNPMVAGANFSTGIRFSVQHFENSDFSINFELQIKSSNKINSTSNLVNLHINITAAAQVQVRGVSHPPQIILPLHNWEPKDEPTKEEEIGPLVEHIYELHNIGPSAINNTVLHVGWPVSSGEEFLLYILHIQTHGPLHCQTSSPINIMQINFAIPQDTPELAAFLYNSTISHYIRRREVAVAEPYRRNSAKILNCTNVKCILISCNVGQLERGKSAALKIRSRLWAETFLQRKNDPYTLSSNVSFKVKNMPYKVQPAKLPEGSIAIRTSVIWSTPNVSFVIPLWVIILAIMLGLLVLAVLTLALWKCGFFDRARPPQDDMADREQLTNNKTTDA.

A signal peptide spans 1-23 (MPRRQPPRPLLLLSALLCAPASA). Residues 24–991 (FNLDEEKLTV…WSTPNVSFVI (968 aa)) are Extracellular-facing. FG-GAP repeat units follow at residues 28 to 90 (EEKL…RCRQ), 104 to 165 (NGTR…AYAE), 170 to 222 (RNSN…ITNY), 236 to 288 (QTGV…SSDL), 289 to 354 (TFIQ…FLFR), 355 to 413 (DPQI…GLKT), and 417 to 480 (QVLN…LNPM). A glycan (N-linked (GlcNAc...) asparagine) is linked at Asn66. The cysteines at positions 81 and 88 are disulfide-linked. Residue Asn104 is glycosylated (N-linked (GlcNAc...) asparagine). A disulfide bridge connects residues Cys132 and Cys153. An N-linked (GlcNAc...) asparagine glycan is attached at Asn159. A disulfide bond links Cys169 and Cys182. The N-linked (GlcNAc...) asparagine glycan is linked to Asn221. Positions 257, 259, 261, and 265 each coordinate Ca(2+). N-linked (GlcNAc...) asparagine glycosylation is found at Asn284 and Asn293. Ca(2+) contacts are provided by Asp311, Asn313, Asp315, Leu317, Asp319, Asp377, Asn379, Asp381, Tyr383, and Asp385. The Cell attachment site motif lies at 437–439 (RGD). Ca(2+) is bound by residues Asp441, Asp443, Asn445, Tyr447, and Asp449. N-linked (GlcNAc...) asparagine glycosylation is present at Asn486. 2 disulfides stabilise this stretch: Cys489/Cys500 and Cys506/Cys562. N-linked (GlcNAc...) asparagine glycosylation is present at Asn587. 2 disulfide bridges follow: Cys623/Cys629 and Cys695/Cys708. Asn701, Asn719, Asn751, Asn762, Asn818, Asn877, and Asn904 each carry an N-linked (GlcNAc...) asparagine glycan. Disulfide bonds link Cys849–Cys905 and Cys910–Cys915. Residues Asn952 and Asn986 are each glycosylated (N-linked (GlcNAc...) asparagine). A helical transmembrane segment spans residues 992–1015 (PLWVIILAIMLGLLVLAVLTLALW). At 1016–1044 (KCGFFDRARPPQDDMADREQLTNNKTTDA) the chain is on the cytoplasmic side.

Belongs to the integrin alpha chain family. As to quaternary structure, heterodimer of an alpha and a beta subunit. The alpha subunit is composed of a heavy and a light chain linked by a disulfide bond. Alpha-8 associates with beta-1. Prominently expressed on axons and on cells in contact with basal laminae in embryos.

The protein resides in the membrane. Its subcellular location is the cell membrane. Integrin alpha-8/beta-1 functions in the genesis of kidney and probably of other organs by regulating the recruitment of mesenchymal cells into epithelial structures. It recognizes the sequence R-G-D in a wide array of ligands including TNC, FN1, SPP1, TGFB1, TGFB3 and VTN. NPNT is probably its functional ligand in kidney genesis. Neuronal receptor for TNC it mediates cell-cell interactions and regulates neurite outgrowth of sensory and motor neurons. The polypeptide is Integrin alpha-8 (ITGA8) (Gallus gallus (Chicken)).